The primary structure comprises 245 residues: Endo-chitosanase (245 aa).

The signal sequence occupies residues Met-1–Ala-17.

It belongs to the glycosyl hydrolase 75 family.

It localises to the secreted. It catalyses the reaction Endohydrolysis of beta-(1-&gt;4)-linkages between D-glucosamine residues in a partly acetylated chitosan.. Its function is as follows. Chitosanase catalyzing the endo-type cleavage of chitosan, the deacylated form of chitin. Chitosanase may be crucial in the degradation of the deacetylated portion of chitin in the fungal cell wall. Chitoolisaccharides produced by the hydrolysis of partially N-acetylated chitosan are known to have many biological activities, including antibacterial activity, immune-enhancing effects, and elicitor activity. The protein is Endo-chitosanase (csn) of Aspergillus oryzae (strain ATCC 42149 / RIB 40) (Yellow koji mold).